The following is an 899-amino-acid chain: RNA-binding motif protein 25 (899 aa).

Over residues Met1–Ser20 the composition is skewed to polar residues. Residues Met1–Gly112 are disordered. The span at Ile26 to Gln63 shows a compositional bias: pro residues. Residues Thr204–Ala281 enclose the RRM domain. 2 disordered regions span residues Lys298–Leu572 and Gly611–Gly778. 2 stretches are compositionally biased toward basic and acidic residues: residues Glu317–Ile340 and Glu354–Lys372. The segment covering Pro375 to Ala384 has biased composition (pro residues). The span at Trp430–Lys505 shows a compositional bias: basic and acidic residues. The stretch at Asn434–Asp578 forms a coiled coil. A compositionally biased stretch (acidic residues) spans Tyr515–Asp524. Positions Ser526 to Ala533 match the Nuclear localization signal 1 motif. A compositionally biased stretch (basic and acidic residues) spans Ala533–Glu568. Residues Gly626–Ser640 show a composition bias toward polar residues. Basic and acidic residues-rich tracts occupy residues Pro723–Gln733 and Asp740–Gly778. A Nuclear localization signal 2 motif is present at residues Ser735–Ala742. One can recognise a PWI domain in the interval Glu802 to Ala899.

In terms of assembly, specifically associates with functional splicing complexes. Associates with exon junction complex (EJC) proteins. In terms of processing, phosphorylated; the phosphorylation level is repressed by abscisic acid (ABA).

The protein resides in the nucleus. Its function is as follows. RNA-binding protein that acts as a regulator of alternative pre-mRNA splicing. Negative regulator of responses to abscisic acid (ABA), including in early development. This chain is RNA-binding motif protein 25, found in Arabidopsis thaliana (Mouse-ear cress).